We begin with the raw amino-acid sequence, 371 residues long: Ferrochelatase (371 aa).

2 residues coordinate Fe cation: His218 and Glu299.

The protein belongs to the ferrochelatase family.

The protein resides in the cytoplasm. It carries out the reaction heme b + 2 H(+) = protoporphyrin IX + Fe(2+). It functions in the pathway porphyrin-containing compound metabolism; protoheme biosynthesis; protoheme from protoporphyrin-IX: step 1/1. Functionally, catalyzes the ferrous insertion into protoporphyrin IX. The sequence is that of Ferrochelatase from Ralstonia nicotianae (strain ATCC BAA-1114 / GMI1000) (Ralstonia solanacearum).